We begin with the raw amino-acid sequence, 146 residues long: Hemoglobin subunit beta (146 aa).

One can recognise a Globin domain in the interval 2-146 (FLTAEEKGLV…VANALAHKYH (145 aa)). A Phosphoserine modification is found at Ser44. Lys59 bears the N6-acetyllysine mark. Residue His63 coordinates heme b. Lys82 is subject to N6-acetyllysine. His92 contributes to the heme b binding site. Cys93 bears the S-nitrosocysteine mark. Lys144 bears the N6-acetyllysine mark.

This sequence belongs to the globin family. As to quaternary structure, heterotetramer of two alpha chains and two beta chains. In terms of tissue distribution, red blood cells.

Functionally, involved in oxygen transport from the lung to the various peripheral tissues. The sequence is that of Hemoglobin subunit beta (HBB) from Lynx lynx (Eurasian lynx).